A 149-amino-acid chain; its full sequence is 3-hydroxyacyl-[acyl-carrier-protein] dehydratase FabZ (149 aa).

Histidine 53 is a catalytic residue.

This sequence belongs to the thioester dehydratase family. FabZ subfamily.

It is found in the cytoplasm. It catalyses the reaction a (3R)-hydroxyacyl-[ACP] = a (2E)-enoyl-[ACP] + H2O. Its function is as follows. Involved in unsaturated fatty acids biosynthesis. Catalyzes the dehydration of short chain beta-hydroxyacyl-ACPs and long chain saturated and unsaturated beta-hydroxyacyl-ACPs. The chain is 3-hydroxyacyl-[acyl-carrier-protein] dehydratase FabZ from Neisseria meningitidis serogroup B (strain ATCC BAA-335 / MC58).